Consider the following 239-residue polypeptide: Ribosomal RNA large subunit methyltransferase E (239 aa).

The interval 1–20 (MTKAPIAGNRTGRKLGQRVK) is disordered. Positions 11–20 (TGRKLGQRVK) are enriched in basic residues. Positions 81, 83, 104, 120, and 144 each coordinate S-adenosyl-L-methionine. Lysine 184 (proton acceptor) is an active-site residue.

The protein belongs to the class I-like SAM-binding methyltransferase superfamily. RNA methyltransferase RlmE family.

It localises to the cytoplasm. It catalyses the reaction uridine(2552) in 23S rRNA + S-adenosyl-L-methionine = 2'-O-methyluridine(2552) in 23S rRNA + S-adenosyl-L-homocysteine + H(+). Specifically methylates the uridine in position 2552 of 23S rRNA at the 2'-O position of the ribose in the fully assembled 50S ribosomal subunit. The sequence is that of Ribosomal RNA large subunit methyltransferase E from Rhizobium leguminosarum bv. trifolii (strain WSM2304).